We begin with the raw amino-acid sequence, 477 residues long: Histidine--tRNA ligase (477 aa).

This sequence belongs to the class-II aminoacyl-tRNA synthetase family. Homodimer.

It is found in the cytoplasm. It catalyses the reaction tRNA(His) + L-histidine + ATP = L-histidyl-tRNA(His) + AMP + diphosphate + H(+). The protein is Histidine--tRNA ligase of Xanthomonas campestris pv. campestris (strain 8004).